The primary structure comprises 316 residues: Methionyl-tRNA formyltransferase (316 aa).

A (6S)-5,6,7,8-tetrahydrofolate-binding site is contributed by 113–116 (SLLP).

This sequence belongs to the Fmt family.

The catalysed reaction is L-methionyl-tRNA(fMet) + (6R)-10-formyltetrahydrofolate = N-formyl-L-methionyl-tRNA(fMet) + (6S)-5,6,7,8-tetrahydrofolate + H(+). In terms of biological role, attaches a formyl group to the free amino group of methionyl-tRNA(fMet). The formyl group appears to play a dual role in the initiator identity of N-formylmethionyl-tRNA by promoting its recognition by IF2 and preventing the misappropriation of this tRNA by the elongation apparatus. The protein is Methionyl-tRNA formyltransferase of Proteus mirabilis (strain HI4320).